The following is a 459-amino-acid chain: Exodeoxyribonuclease 7 large subunit (459 aa).

This sequence belongs to the XseA family. In terms of assembly, heterooligomer composed of large and small subunits.

Its subcellular location is the cytoplasm. The enzyme catalyses Exonucleolytic cleavage in either 5'- to 3'- or 3'- to 5'-direction to yield nucleoside 5'-phosphates.. Functionally, bidirectionally degrades single-stranded DNA into large acid-insoluble oligonucleotides, which are then degraded further into small acid-soluble oligonucleotides. This is Exodeoxyribonuclease 7 large subunit from Pseudomonas putida (strain ATCC 47054 / DSM 6125 / CFBP 8728 / NCIMB 11950 / KT2440).